The primary structure comprises 584 residues: Levansucrase (584 aa).

The N-terminal stretch at 1–30 is a signal peptide; sequence MAHVRRKVATLNMALAGSLLMVLGAQSALA. Gln31 bears the Pyrrolidone carboxylic acid mark. Sucrose is bound by residues Trp134, Asp135, Ser225, Arg308, and Asp309. Residue Asp135 is the Nucleophile of the active site. An intrachain disulfide couples Cys339 to Cys395. Residue Glu401 is the Proton donor/acceptor of the active site.

The protein belongs to the glycosyl hydrolase 68 family. Monomer. The N-terminus is blocked. The N-terminal Gln is cyclized to a pyroglutamic acid.

Its subcellular location is the secreted. The enzyme catalyses [6)-beta-D-fructofuranosyl-(2-&gt;](n) alpha-D-glucopyranoside + sucrose = [6)-beta-D-fructofuranosyl-(2-&gt;](n+1) alpha-D-glucopyranoside + D-glucose. Strongly inhibited by Hg(2+) and slightly activated by Co(2+). Not inhibited by the metal ion chelator EDTA, suggesting that this enzyme does not need a metal cofactor. In terms of biological role, catalyzes the synthesis of levan, a fructose polymer, by transferring the fructosyl moiety from sucrose to a growing acceptor molecule. Also displays sucrose hydrolase activity. In vitro, catalyzes transfructosylation from sucrose to a variety of acceptors including water (sucrose hydrolysis), glucose (exchange reaction), fructan (polymerase reaction) and sucrose (oligofructoside synthesis). Levansucrase of G.diazotrophicus SRT4, unlike the enzyme of B.subtilis, causes accumulation of large quantities of tri- and tetrasaccharides but small quantities of high-molecular-mass levan. It may act more as a sucrose hydrolase than as a fructan polymerase, and may be the key enzyme in the sucrose metabolism of G.diazotrophicus SRT4. The sequence is that of Levansucrase from Gluconacetobacter diazotrophicus (Acetobacter diazotrophicus).